A 158-amino-acid chain; its full sequence is Toxin Tse2 (158 aa).

As to quaternary structure, forms a heterotetramer with Tsi2 consisting of two Tse2 dimers and two Tsi2 dimers. Formation of the complex inactivates Tse2 enzymatic activity.

The protein resides in the secreted. Toxin secreted by the H1 type VI (H1-T6SS) secretion system into the cytoplasm of recipient cells. Acts likely as a NAD-dependent cytotoxin towards both prokaryotic and eukaryotic cells. This is Toxin Tse2 from Pseudomonas aeruginosa (strain ATCC 15692 / DSM 22644 / CIP 104116 / JCM 14847 / LMG 12228 / 1C / PRS 101 / PAO1).